The following is a 185-amino-acid chain: HTH-type transcriptional regulator SACOL2593 (185 aa).

Positions 6-66 (KENRQRIEEI…YVIQRDLDIF (61 aa)) constitute an HTH tetR-type domain. The segment at residues 29–48 (SMNRIAKELGIGMGTLYRHF) is a DNA-binding region (H-T-H motif).

This is HTH-type transcriptional regulator SACOL2593 from Staphylococcus aureus (strain COL).